The sequence spans 320 residues: ATP-dependent 6-phosphofructokinase (320 aa).

G12 lines the ATP pocket. ADP-binding positions include 22–26 (RGVVR) and 55–60 (RYSVSD). Residues 73–74 (RF) and 103–106 (GDGS) contribute to the ATP site. D104 is a Mg(2+) binding site. Residue 126–128 (TID) participates in substrate binding. Residue D128 is the Proton acceptor of the active site. ADP is bound at residue R155. Substrate-binding positions include R163 and 170–172 (MGR). ADP contacts are provided by residues 186-188 (GCE), K212, and 214-216 (KKH). Substrate is bound by residues E223, R244, and 250–253 (HIQR).

This sequence belongs to the phosphofructokinase type A (PFKA) family. ATP-dependent PFK group I subfamily. Prokaryotic clade 'B1' sub-subfamily. Homotetramer. It depends on Mg(2+) as a cofactor.

It is found in the cytoplasm. It carries out the reaction beta-D-fructose 6-phosphate + ATP = beta-D-fructose 1,6-bisphosphate + ADP + H(+). It functions in the pathway carbohydrate degradation; glycolysis; D-glyceraldehyde 3-phosphate and glycerone phosphate from D-glucose: step 3/4. Its activity is regulated as follows. Allosterically activated by ADP and other diphosphonucleosides, and allosterically inhibited by phosphoenolpyruvate. Functionally, catalyzes the phosphorylation of D-fructose 6-phosphate to fructose 1,6-bisphosphate by ATP, the first committing step of glycolysis. In Escherichia fergusonii (strain ATCC 35469 / DSM 13698 / CCUG 18766 / IAM 14443 / JCM 21226 / LMG 7866 / NBRC 102419 / NCTC 12128 / CDC 0568-73), this protein is ATP-dependent 6-phosphofructokinase.